An 822-amino-acid polypeptide reads, in one-letter code: ATP-dependent zinc metalloprotease FtsH (822 aa).

The Cytoplasmic segment spans residues 1–76 (MEFNKLELLI…NQKEPGKARK (76 aa)). Polar residues predominate over residues 44-54 (SLDQPSDAPSN). The disordered stretch occupies residues 44–71 (SLDQPSDAPSNNKKRNLDQPDNPNQKEP). The helical transmembrane segment at 77 to 97 (IIWSFIIIILVLGVLALIILS) threads the bilayer. The Extracellular portion of the chain corresponds to 98–251 (GFSFSATSLN…QSMSLPTSYS (154 aa)). The chain crosses the membrane as a helical span at residues 252 to 272 (FYTAASLVLSILPFILLIGII). Topologically, residues 273–822 (YYSMRKMGQA…SKESSSDKKK (550 aa)) are cytoplasmic. 347 to 354 (GPPGTGKT) serves as a coordination point for ATP. His569 is a binding site for Zn(2+). Glu570 is a catalytic residue. Zn(2+) is bound by residues His573 and Asp648. Residues 758 to 794 (KKELEEKKKAEDLIRKAKKESEASSKEEKEMDVEKKV) are compositionally biased toward basic and acidic residues. Residues 758–822 (KKELEEKKKA…SKESSSDKKK (65 aa)) are disordered. Low complexity predominate over residues 796 to 805 (KPSASSTEPT). Basic and acidic residues predominate over residues 812–822 (PSKESSSDKKK).

This sequence in the central section; belongs to the AAA ATPase family. It in the C-terminal section; belongs to the peptidase M41 family. As to quaternary structure, homohexamer. The cofactor is Zn(2+).

Its subcellular location is the cell membrane. Acts as a processive, ATP-dependent zinc metallopeptidase for both cytoplasmic and membrane proteins. Plays a role in the quality control of integral membrane proteins. The sequence is that of ATP-dependent zinc metalloprotease FtsH from Malacoplasma penetrans (strain HF-2) (Mycoplasma penetrans).